Consider the following 64-residue polypeptide: Large ribosomal subunit protein uL30 (64 aa).

The protein belongs to the universal ribosomal protein uL30 family. As to quaternary structure, part of the 50S ribosomal subunit.

This Methylorubrum extorquens (strain CM4 / NCIMB 13688) (Methylobacterium extorquens) protein is Large ribosomal subunit protein uL30.